The sequence spans 390 residues: Protein MalY (390 aa).

N6-(pyridoxal phosphate)lysine is present on K233.

Belongs to the class-II pyridoxal-phosphate-dependent aminotransferase family. MalY/PatB cystathionine beta-lyase subfamily. In terms of assembly, homodimer. Interacts with MalT. The cofactor is pyridoxal 5'-phosphate.

The enzyme catalyses L,L-cystathionine + H2O = L-homocysteine + pyruvate + NH4(+). It catalyses the reaction an S-substituted L-cysteine + H2O = a thiol + pyruvate + NH4(+). Functionally, acts as a beta-cystathionase and as a repressor of the maltose regulon. This is Protein MalY (malY) from Escherichia coli (strain K12).